A 161-amino-acid chain; its full sequence is MTRNEKAEIISNLEAEFKTSDAIVVCDYKGLSVKKLEALRNSARELNVKVQVVKNTLANIALNNCGKSGMELKDTNIFVWGEDQLAVTKVVAKFEESNNELFKIKTAHIDGEVASVSKVVALSKMPSRDELIAMLLQVWNAPIQNFTIGLNALREKKEQTA.

It belongs to the universal ribosomal protein uL10 family. As to quaternary structure, part of the ribosomal stalk of the 50S ribosomal subunit. The N-terminus interacts with L11 and the large rRNA to form the base of the stalk. The C-terminus forms an elongated spine to which L12 dimers bind in a sequential fashion forming a multimeric L10(L12)X complex.

Forms part of the ribosomal stalk, playing a central role in the interaction of the ribosome with GTP-bound translation factors. This chain is Large ribosomal subunit protein uL10, found in Campylobacter fetus subsp. fetus (strain 82-40).